A 299-amino-acid chain; its full sequence is Protoheme IX farnesyltransferase (299 aa).

8 helical membrane-spanning segments follow: residues 24–44 (VVAL…DQGM), 46–66 (WNAL…AAAI), 94–114 (VHAL…LAWG), 118–138 (LTAW…TLFL), 146–166 (IVLG…SVTG), 172–192 (ALLL…ALAV), 232–252 (LPFI…ALGV), and 278–298 (ITYL…PVTL).

This sequence belongs to the UbiA prenyltransferase family. Protoheme IX farnesyltransferase subfamily.

Its subcellular location is the cell inner membrane. It catalyses the reaction heme b + (2E,6E)-farnesyl diphosphate + H2O = Fe(II)-heme o + diphosphate. It participates in porphyrin-containing compound metabolism; heme O biosynthesis; heme O from protoheme: step 1/1. Converts heme B (protoheme IX) to heme O by substitution of the vinyl group on carbon 2 of heme B porphyrin ring with a hydroxyethyl farnesyl side group. This is Protoheme IX farnesyltransferase from Hahella chejuensis (strain KCTC 2396).